A 276-amino-acid chain; its full sequence is Ubiquinone biosynthesis protein coq11, mitochondrial (276 aa).

It belongs to the NAD(P)-dependent epimerase/dehydratase family.

It localises to the mitochondrion. Acts in the coenzyme Q biosynthetic pathway. The sequence is that of Ubiquinone biosynthesis protein coq11, mitochondrial from Schizosaccharomyces pombe (strain 972 / ATCC 24843) (Fission yeast).